Here is a 133-residue protein sequence, read N- to C-terminus: MSTVDIDSLVEQICSLDLCKAAELVEKMEQKLGFPKGGLLTAVPAAGGNQVEGGAAAEEKTDFSVVFESYAADKKISVIKAVRECTSLGLKEAKEFVEKEGAKELIEGKKYKKEEAEEIKKKLEDAGAKVSIK.

The protein belongs to the bacterial ribosomal protein bL12 family. As to quaternary structure, homodimer. Part of the ribosomal stalk of the 50S ribosomal subunit. Forms a multimeric L10(L12)X complex, where L10 forms an elongated spine to which 2 to 4 L12 dimers bind in a sequential fashion. Binds GTP-bound translation factors.

Its function is as follows. Forms part of the ribosomal stalk which helps the ribosome interact with GTP-bound translation factors. Is thus essential for accurate translation. The chain is Large ribosomal subunit protein bL12 from Ehrlichia chaffeensis (strain ATCC CRL-10679 / Arkansas).